Consider the following 91-residue polypeptide: Probable Fe(2+)-trafficking protein (91 aa).

The protein belongs to the Fe(2+)-trafficking protein family. As to quaternary structure, monomer.

Its function is as follows. Could be a mediator in iron transactions between iron acquisition and iron-requiring processes, such as synthesis and/or repair of Fe-S clusters in biosynthetic enzymes. In Citrobacter koseri (strain ATCC BAA-895 / CDC 4225-83 / SGSC4696), this protein is Probable Fe(2+)-trafficking protein.